Reading from the N-terminus, the 951-residue chain is UvrABC system protein A (951 aa).

Position 33-40 (33-40 (GLSGSGKS)) interacts with ATP. The C4-type zinc-finger motif lies at 252-279 (CPICGFTVGELEPRLFSFNAPQGACPDC). 2 consecutive ABC transporter domains span residues 309 to 587 (WNPI…RKSL) and 607 to 935 (GNGK…QYLK). ATP is bound at residue 639–646 (GVSGSGKS). The C4-type zinc finger occupies 738-764 (CEACHGDGILKIEMNFLPDVFVPCEVC).

Belongs to the ABC transporter superfamily. UvrA family. As to quaternary structure, forms a heterotetramer with UvrB during the search for lesions.

Its subcellular location is the cytoplasm. Its function is as follows. The UvrABC repair system catalyzes the recognition and processing of DNA lesions. UvrA is an ATPase and a DNA-binding protein. A damage recognition complex composed of 2 UvrA and 2 UvrB subunits scans DNA for abnormalities. When the presence of a lesion has been verified by UvrB, the UvrA molecules dissociate. The polypeptide is UvrABC system protein A (Lactiplantibacillus plantarum (strain ATCC BAA-793 / NCIMB 8826 / WCFS1) (Lactobacillus plantarum)).